An 82-amino-acid chain; its full sequence is Turripeptide Gdm9.1 (82 aa).

The N-terminal stretch at 1–23 is a signal peptide; that stretch reads MMAKLMITVMMVLLLSLQQGADG. Residues 24-46 constitute a propeptide that is removed on maturation; sequence RSERWRKNQMAASRIMRNLITAR. 2 positions are modified to 4-hydroxyproline: P49 and P50. Cystine bridges form between C53-C68, C58-C72, and C64-C79. 4-carboxyglutamate is present on residues E60 and E63.

Belongs to the Pg turripeptide superfamily. Expressed by the venom duct.

The protein resides in the secreted. This is Turripeptide Gdm9.1 from Gemmula diomedea (Gem-turris).